A 306-amino-acid polypeptide reads, in one-letter code: Cytochrome P450 monooxygenase aclO (306 aa).

Cysteine 237 contributes to the heme binding site.

It belongs to the cytochrome P450 family. It depends on heme as a cofactor.

Its pathway is mycotoxin biosynthesis. Functionally, cytochrome P450 monooxygenase; part of the gene cluster that mediates the biosynthesis of aspirochlorine (or antibiotic A30641), an unusual halogenated spiro compound with distinctive antifungal properties due to selective inhibition of protein biosynthesis, and which is also active against bacteria, viruses, and murine tumor cells. The non-ribosomal peptide synthetase (NRPS) aclP is responsible the formation of the diketopiperazine (DKP) core from the condensation of 2 phenylalanine residues. One Phe residue is tailored into chlorotyrosine by hydroxylation and chlorination, whereas the second Phe undergoes an unprecedented C-C bond cleavage to be converted into glycine. After formation of the DKP, sulfur is incorporated into the DKP by conjugation with glutathione by aclG, followed by its stepwise degradation to the thiol by aclI, aclJ and aclK, and the dithiol oxidation by aclT. In addition, oxygenases (aclB, aclC, aclL and aclO) and O-methyltransferases (aclM and aclU) act as tailoring enzymes to produce the intermediate dechloroaspirochlorine. Ultimately, chlorination of dechloroaspirochlorine by the halogenase aclH is the last step in the aspirochlorine pathway. In Aspergillus oryzae (strain ATCC 42149 / RIB 40) (Yellow koji mold), this protein is Cytochrome P450 monooxygenase aclO.